Here is a 144-residue protein sequence, read N- to C-terminus: Large ribosomal subunit protein uL16 (144 aa).

It belongs to the universal ribosomal protein uL16 family. As to quaternary structure, part of the 50S ribosomal subunit.

Binds 23S rRNA and is also seen to make contacts with the A and possibly P site tRNAs. This Natranaerobius thermophilus (strain ATCC BAA-1301 / DSM 18059 / JW/NM-WN-LF) protein is Large ribosomal subunit protein uL16.